The sequence spans 110 residues: Cation efflux system protein CusF (110 aa).

An N-terminal signal peptide occupies residues 1 to 21 (MKKALQVAMFSLFTVIGFNAQ).

The cus efflux system is composed of CusA, CusB, CusC and CusF. Interacts with copper-exporting P-type ATPase CopA; when this protein is precharged with copper it binds very little CopA.

It localises to the periplasm. Functionally, part of a cation efflux system that mediates resistance to copper and silver. Binds one copper per polypeptide. The chain is Cation efflux system protein CusF (cusF) from Escherichia coli (strain K12).